A 78-amino-acid chain; its full sequence is UPF0291 protein ABC2165 (78 aa).

The tract at residues 56 to 78 (AKGNDVTPQKLKDSKAQKHKRLH) is disordered.

Belongs to the UPF0291 family.

Its subcellular location is the cytoplasm. In Shouchella clausii (strain KSM-K16) (Alkalihalobacillus clausii), this protein is UPF0291 protein ABC2165.